The following is a 392-amino-acid chain: Sulfate adenylyltransferase (392 aa).

This sequence belongs to the sulfate adenylyltransferase family.

It catalyses the reaction sulfate + ATP + H(+) = adenosine 5'-phosphosulfate + diphosphate. The protein operates within sulfur metabolism; hydrogen sulfide biosynthesis; sulfite from sulfate: step 1/3. This chain is Sulfate adenylyltransferase, found in Nostoc punctiforme (strain ATCC 29133 / PCC 73102).